Reading from the N-terminus, the 1157-residue chain is Zinc finger protein 516 (1157 aa).

The segment covering 1–13 (MDRSREAEMELRR) has biased composition (basic and acidic residues). The interval 1–26 (MDRSREAEMELRRGPSPPRAGRSHEV) is disordered. The interval 1–420 (MDRSREAEME…ATRGKVAEPA (420 aa)) is mediates promoter DNA-binding and activation of transcription. C2H2-type zinc fingers lie at residues 34-56 (HSCCICGKSFPFQSSLSQHMRKH), 62-84 (YKCPYCDHRASQKGNLKIHIRSH), 162-185 (VPCSFCKSRFERKKDLELHVHQAH), 188-211 (FKCRLCSYVTLREESLLSHIERDH), 236-258 (FPCEVCGQAFSQTWFLKAHMKKH), 264-286 (HGCHICGRRFKEPWFLKNHMKAH), and 323-345 (EVCTKCGNLFTNLDSLNAHNAIH). Basic and acidic residues predominate over residues 449-458 (SQEKRKREQD). Disordered regions lie at residues 449–503 (SQEK…QGKS) and 523–653 (SRVH…KGPE). The segment covering 494-503 (ASATTGQGKS) has biased composition (polar residues). A C2H2-type 8 zinc finger spans residues 504-526 (SECFECGKIFRTYHQMVLHSRVH). Residues 531-541 (RDRDPEGDRAA) show a composition bias toward basic and acidic residues. The segment covering 550–561 (EGDSASQPSSPG) has biased composition (polar residues). Positions 575-585 (EVVDDSGEEAV) are enriched in acidic residues. Residues 601 to 612 (GEVTPTALSNGD) are compositionally biased toward polar residues. Lys-630 is covalently cross-linked (Glycyl lysine isopeptide (Lys-Gly) (interchain with G-Cter in SUMO2)). Residues 644-653 (SSRETTKGPE) are compositionally biased toward basic and acidic residues. Residue Lys-669 forms a Glycyl lysine isopeptide (Lys-Gly) (interchain with G-Cter in SUMO2) linkage. Residues 753–776 (HPCPYCTHKTYYPEVLWMHKRIWH) form a C2H2-type 9; atypical zinc finger. Disordered stretches follow at residues 831–996 (TQVP…EPSV) and 1013–1040 (RGEAALQAPPGAPPTLNSAKQEPAAEGQ). The span at 914-928 (GSGSLSRSTTPTPSV) shows a compositional bias: polar residues. Glycyl lysine isopeptide (Lys-Gly) (interchain with G-Cter in SUMO2) cross-links involve residues Lys-1032 and Lys-1051. The C2H2-type 10 zinc finger occupies 1092 to 1114 (FVCVECGKSFHQPSQLRAHLRAH). The disordered stretch occupies residues 1123–1157 (PRDSEVHTASTDAPKQGRDHTTPGTVPAGPLRKGI).

This sequence belongs to the krueppel C2H2-type zinc-finger protein family. In terms of assembly, interacts with PRDM16; the interaction is direct and may play a role in the transcription of brown adipose tissue-specific genes. Interacts with PWWP2B. Interacts with HDAC1; this interaction is enhanced in the presence of PWWP2B. Expressed by adipocytes more specifically in brown adipose tissue compared to white adipose tissue (WAT).

It is found in the nucleus. Its function is as follows. Transcriptional regulator that binds to the promoter and activates the transcription of genes promoting brown adipose tissue (BAT) differentiation. Among brown adipose tissue-specific genes, binds the proximal region of the promoter of the UCP1 gene to activate its transcription and thereby regulate thermogenesis. May also play a role in the cellular response to replication stress. The sequence is that of Zinc finger protein 516 from Mus musculus (Mouse).